The chain runs to 511 residues: Probable lipid II flippase MurJ (511 aa).

A run of 13 helical transmembrane segments spans residues 31 to 51 (IFGA…PNLL), 90 to 110 (LLTL…PWVI), 130 to 150 (LLKI…VGAI), 159 to 179 (IPAF…LFAA), 182 to 202 (FNPP…LQLV), 237 to 257 (ILGV…ASFL), 271 to 291 (LMEF…LPSL), 314 to 334 (CFLL…PLTV), 354 to 374 (LIAY…APGF), 383 to 403 (PVKI…AFIG), 407 to 427 (HAGL…LLYW), 443 to 463 (AFLL…LGML), and 481 to 501 (LMAV…VLGF).

The protein belongs to the MurJ/MviN family.

The protein resides in the cell inner membrane. The protein operates within cell wall biogenesis; peptidoglycan biosynthesis. In terms of biological role, involved in peptidoglycan biosynthesis. Transports lipid-linked peptidoglycan precursors from the inner to the outer leaflet of the cytoplasmic membrane. This is Probable lipid II flippase MurJ from Escherichia coli O157:H7.